Reading from the N-terminus, the 443-residue chain is Probable glycine dehydrogenase (decarboxylating) subunit 1 (443 aa).

Belongs to the GcvP family. N-terminal subunit subfamily. In terms of assembly, the glycine cleavage system is composed of four proteins: P, T, L and H. In this organism, the P 'protein' is a heterodimer of two subunits.

It carries out the reaction N(6)-[(R)-lipoyl]-L-lysyl-[glycine-cleavage complex H protein] + glycine + H(+) = N(6)-[(R)-S(8)-aminomethyldihydrolipoyl]-L-lysyl-[glycine-cleavage complex H protein] + CO2. In terms of biological role, the glycine cleavage system catalyzes the degradation of glycine. The P protein binds the alpha-amino group of glycine through its pyridoxal phosphate cofactor; CO(2) is released and the remaining methylamine moiety is then transferred to the lipoamide cofactor of the H protein. The chain is Probable glycine dehydrogenase (decarboxylating) subunit 1 from Nitratidesulfovibrio vulgaris (strain DP4) (Desulfovibrio vulgaris).